The sequence spans 609 residues: Aspartate--tRNA(Asp/Asn) ligase (609 aa).

Position 175 (Glu175) interacts with L-aspartate. Residues 199–202 (QQFK) are aspartate. L-aspartate is bound by residues Arg221 and His468. Residue 221–223 (RDE) participates in ATP binding. An ATP-binding site is contributed by Glu502. Arg509 provides a ligand contact to L-aspartate. ATP is bound at residue 554-557 (GIDR).

It belongs to the class-II aminoacyl-tRNA synthetase family. Type 1 subfamily. As to quaternary structure, homodimer.

Its subcellular location is the cytoplasm. The enzyme catalyses tRNA(Asx) + L-aspartate + ATP = L-aspartyl-tRNA(Asx) + AMP + diphosphate. Aspartyl-tRNA synthetase with relaxed tRNA specificity since it is able to aspartylate not only its cognate tRNA(Asp) but also tRNA(Asn). Reaction proceeds in two steps: L-aspartate is first activated by ATP to form Asp-AMP and then transferred to the acceptor end of tRNA(Asp/Asn). The protein is Aspartate--tRNA(Asp/Asn) ligase of Caulobacter sp. (strain K31).